The primary structure comprises 391 residues: Formate-dependent phosphoribosylglycinamide formyltransferase (391 aa).

Residues 18–19 (EL) and glutamate 78 contribute to the N(1)-(5-phospho-beta-D-ribosyl)glycinamide site. Residues arginine 110, lysine 151, 156-161 (SSGKGQ), 191-194 (EEFI), and glutamate 199 contribute to the ATP site. The region spanning 115-305 (ELAAQQLGVR…EFELHLRAIL (191 aa)) is the ATP-grasp domain. Mg(2+)-binding residues include glutamate 264 and glutamate 276. N(1)-(5-phospho-beta-D-ribosyl)glycinamide contacts are provided by residues aspartate 283, lysine 353, and 360-361 (RR).

This sequence belongs to the PurK/PurT family. As to quaternary structure, homodimer.

The enzyme catalyses N(1)-(5-phospho-beta-D-ribosyl)glycinamide + formate + ATP = N(2)-formyl-N(1)-(5-phospho-beta-D-ribosyl)glycinamide + ADP + phosphate + H(+). It functions in the pathway purine metabolism; IMP biosynthesis via de novo pathway; N(2)-formyl-N(1)-(5-phospho-D-ribosyl)glycinamide from N(1)-(5-phospho-D-ribosyl)glycinamide (formate route): step 1/1. Involved in the de novo purine biosynthesis. Catalyzes the transfer of formate to 5-phospho-ribosyl-glycinamide (GAR), producing 5-phospho-ribosyl-N-formylglycinamide (FGAR). Formate is provided by PurU via hydrolysis of 10-formyl-tetrahydrofolate. The protein is Formate-dependent phosphoribosylglycinamide formyltransferase of Synechocystis sp. (strain ATCC 27184 / PCC 6803 / Kazusa).